The sequence spans 760 residues: Prolyl endopeptidase FAP (760 aa).

The Cytoplasmic segment spans residues 1 to 4 (MKTW). The helical; Signal-anchor for type II membrane protein transmembrane segment at 5 to 25 (VKIVFGVATSAVLALLVMCIV) threads the bilayer. Residues 26–760 (LRPSRVHNSE…FLKQCFSLSD (735 aa)) are Extracellular-facing. N-linked (GlcNAc...) asparagine glycosylation is found at Asn-49, Asn-92, and Asn-99. 2 residues coordinate substrate: Glu-203 and Glu-204. N-linked (GlcNAc...) asparagine glycosylation is found at Asn-227 and Asn-314. 3 cysteine pairs are disulfide-bonded: Cys-321–Cys-332, Cys-438–Cys-441, and Cys-448–Cys-466. Catalysis depends on Ser-624, which acts as the Charge relay system. A disulfide bridge links Cys-643 with Cys-755. Residue Asn-679 is glycosylated (N-linked (GlcNAc...) asparagine). Active-site charge relay system residues include Asp-702 and His-734.

Belongs to the peptidase S9B family. As to quaternary structure, homodimer; homodimerization is required for activity of both plasma membrane and soluble forms. The monomer is inactive. Heterodimer with DPP4. Interacts with PLAUR; the interaction occurs at the cell surface of invadopodia membranes. Interacts with ITGB1. Interacts with ITGA3. Associates with integrin alpha-3/beta-1; the association occurs in a collagen-dependent manner at the cell surface of invadopodia membranes. Post-translationally, N-glycosylated. The N-terminus may be blocked. Expressed in adipose tissue. Expressed in the dermal fibroblasts in the fetal skin. Expressed in the granulation tissue of healing wounds and on reactive stromal fibroblast in epithelial cancers. Expressed in activated fibroblast-like synoviocytes from inflamed synovial tissues. Expressed in activated hepatic stellate cells (HSC) and myofibroblasts from cirrhotic liver, but not detected in normal liver. Expressed in glioma cells (at protein level). Expressed in glioblastomas and glioma cells. Isoform 1 and isoform 2 are expressed in melanoma, carcinoma and fibroblast cell lines.

The protein resides in the cell surface. Its subcellular location is the cell membrane. The protein localises to the cell projection. It is found in the lamellipodium membrane. It localises to the invadopodium membrane. The protein resides in the ruffle membrane. Its subcellular location is the membrane. The protein localises to the secreted. It is found in the cytoplasm. The enzyme catalyses Hydrolysis of Pro-|-Xaa &gt;&gt; Ala-|-Xaa in oligopeptides.. It catalyses the reaction Release of an N-terminal dipeptide, Xaa-Yaa-|-Zaa-, from a polypeptide, preferentially when Yaa is Pro, provided Zaa is neither Pro nor hydroxyproline.. Its activity is regulated as follows. Gelatinase activity is inhibited by serine-protease inhibitors, such as phenylmethylsulfonyl fluoride (PMSF), 4-(2-aminoethyl)-benzenesulfonyl fluoride hydrochloride (AEBSF), 4-amidino phenylsulfonyl fluoride (APSF) and diisopropyl fluorophosphate (DFP), N-ethylmaleimide (NEM) and phenylmethylsulfonyl fluoride (PMSF). Dipeptidyl peptidase activity is inhibited by 2,2'-azino-bis(3-ethylbenzthiazoline-6-sulfonic acid), diisopropylfluorophosphate (DFP). Prolyl endopeptidase activity is inhibited by the boronic acid peptide Ac-Gly-BoroPro, Ac-Gly-Pro-chloromethyl ketone and Thr-Ser-Gly-chloromethyl ketone. Its function is as follows. Cell surface glycoprotein serine protease that participates in extracellular matrix degradation and involved in many cellular processes including tissue remodeling, fibrosis, wound healing, inflammation and tumor growth. Both plasma membrane and soluble forms exhibit post-proline cleaving endopeptidase activity, with a marked preference for Ala/Ser-Gly-Pro-Ser/Asn/Ala consensus sequences, on substrate such as alpha-2-antiplasmin SERPINF2 and SPRY2. Degrade also gelatin, heat-denatured type I collagen, but not native collagen type I and IV, vitronectin, tenascin, laminin, fibronectin, fibrin or casein. Also has dipeptidyl peptidase activity, exhibiting the ability to hydrolyze the prolyl bond two residues from the N-terminus of synthetic dipeptide substrates provided that the penultimate residue is proline, with a preference for Ala-Pro, Ile-Pro, Gly-Pro, Arg-Pro and Pro-Pro. Natural neuropeptide hormones for dipeptidyl peptidase are the neuropeptide Y (NPY), peptide YY (PYY), substance P (TAC1) and brain natriuretic peptide 32 (NPPB). The plasma membrane form, in association with either DPP4, PLAUR or integrins, is involved in the pericellular proteolysis of the extracellular matrix (ECM), and hence promotes cell adhesion, migration and invasion through the ECM. Plays a role in tissue remodeling during development and wound healing. Participates in the cell invasiveness towards the ECM in malignant melanoma cancers. Enhances tumor growth progression by increasing angiogenesis, collagen fiber degradation and apoptosis and by reducing antitumor response of the immune system. Promotes glioma cell invasion through the brain parenchyma by degrading the proteoglycan brevican. Acts as a tumor suppressor in melanocytic cells through regulation of cell proliferation and survival in a serine protease activity-independent manner. The protein is Prolyl endopeptidase FAP of Homo sapiens (Human).